Consider the following 1174-residue polypeptide: K(+) efflux antiporter 2, chloroplastic (1174 aa).

The N-terminal 57 residues, 1–57 (MDFASSVQRQSMFHGGADFASYCLPNRMISAKLCPKGLGGTRFWDPMIDSKVRSAIR), are a transit peptide targeting the chloroplast. Residues 58–565 (SKRNVSYRSS…MFPQQEVNEE (508 aa)) are Stromal-facing. The tract at residues 119 to 141 (GSDDREVTFSKEEKDTREQDSAP) is disordered. Residues 142-350 (SLEELRDLLN…ALQRAEKTLF (209 aa)) adopt a coiled-coil conformation. Residue Lys170 is modified to N6-acetyllysine; by NSI. Residues 420 to 448 (EAEGEAEKSKNVVLTKKQEVQKDLPRESS) are compositionally biased toward basic and acidic residues. Residues 420–457 (EAEGEAEKSKNVVLTKKQEVQKDLPRESSSHNGTKTSL) are disordered. Residues 566 to 586 (EASLLDVLWLLLASVIFVPLF) traverse the membrane as a helical segment. Topologically, residues 587–592 (QKIPGG) are chloroplast intermembrane. Residues 593-613 (SPVLGYLAAGILIGPYGLSII) traverse the membrane as a helical segment. Topologically, residues 614-620 (RNVHGTK) are stromal. A helical transmembrane segment spans residues 621–641 (AIAEFGVVFLLFNIGLELSVE). Topologically, residues 642 to 648 (RLSSMKK) are chloroplast intermembrane. The helical transmembrane segment at 649-669 (YVFGLGSAQVLVTAAVIGLIT) threads the bilayer. Residues 670 to 678 (HYVAGQAGP) lie on the Stromal side of the membrane. The chain crosses the membrane as a helical span at residues 679–699 (AAIVIGNGLALSSTAVVLQVL). Residues 700 to 713 (QERGESTSRHGRAT) are Chloroplast intermembrane-facing. A helical transmembrane segment spans residues 714-734 (FSVLLFQDLAVVVLLILIPLI). Topologically, residues 735–746 (SPNSSKGGIGFQ) are stromal. A helical transmembrane segment spans residues 747–767 (AIAEALGLAAIKAAVAITGII). Over 768–807 (AGGRLLLRPIYKQIAENRNAEIFSANTLLVILGTSLLTAR) the chain is Chloroplast intermembrane. The helical transmembrane segment at 808-828 (AGLSMALGAFLAGLLLAETEF) threads the bilayer. At 829–841 (SLQVESDIAPYRG) the chain is on the stromal side. A helical membrane pass occupies residues 842 to 862 (LLLGLFFMTVGMSIDPKLLLA). The Chloroplast intermembrane segment spans residues 863–865 (NFP). Residues 866–886 (LIMGTLGLLLVGKTILVVIIG) traverse the membrane as a helical segment. Residues 887 to 898 (KLFGISIISAVR) lie on the Stromal side of the membrane. Residues 899-919 (VGLLLAPGGEFAFVAFGEAVN) traverse the membrane as a helical segment. Residues 920-928 (QGIMTPQLS) lie on the Chloroplast intermembrane side of the membrane. The helical transmembrane segment at 929–949 (SLLFLVVGISMALTPWLAAGG) threads the bilayer. Residues 950–1174 (QLIASRFELQ…NQIIEGTLAI (225 aa)) are Stromal-facing. Positions 975–1092 (QGHIIICGFG…EKAGATAVVP (118 aa)) constitute an RCK N-terminal domain. A disordered region spans residues 1141–1174 (SLGYGFSRSTSKPKPPSPSETSDDNQIIEGTLAI).

Belongs to the monovalent cation:proton antiporter 2 (CPA2) transporter (TC 2.A.37) family. KEA (TC 2.A.37.1) subfamily. Post-translationally, acetylated at Lys-170 by the stromal acetyltransferase enzyme NSI. In terms of tissue distribution, detected in leaves, stems and flowers. Expressed in shoots and roots. Mainly localized to leaf veins, hypocotyls, mesophylls and guard cells. Accumulates at high levels in small and dividing plastids (at protein level).

The protein localises to the plastid. It localises to the chloroplast inner membrane. It is found in the plastid inner membrane. It catalyses the reaction K(+)(in) + H(+)(out) = K(+)(out) + H(+)(in). With respect to regulation, repressed by sodium ions Na(+). In terms of biological role, electroneutral K(+)/H(+) efflux antiporter modulating monovalent cation and pH homeostasis in plastids, especially during plastid division and thylakoid membrane formation. Transports K(+) and Cs(+) preferentially relative to Na(+) or Li(+). May function in osmotic adjustment. Collaboratively with KEA1, adjusts alkaline stromal pH upon light to dark transitions in plastids. Together with KEA1, critical for chloroplast development, including chloroplast RNA-metabolism (e.g. rRNA maturation, polysome loading and RNA-protein interactions) and plastid gene expression (PGE), ion homeostasis, and photosynthesis. Contributes, during early seedling development, to the regulation of photosynthesis and abscisic acid- (ABA-) mediated primary root growth in a sucrose-dependent manner. Involved in the regulation of reactive oxygen and nitrogen species (ROS and RNS) metabolism. Required in roots for rapid hyperosmotic-induced Ca(2+) responses and for osmo-sensory potentiation in hyperosmotic conditions. May counteract resilience to drought and salt stress, involving photorespiratory pathway and stomata closure. The protein is K(+) efflux antiporter 2, chloroplastic of Arabidopsis thaliana (Mouse-ear cress).